A 1453-amino-acid polypeptide reads, in one-letter code: Chromatin remodeling regulator CECR2 (1453 aa).

The disordered stretch occupies residues 170 to 237 (VQGRSNGELS…DLQTRNGSRG (68 aa)). Basic residues predominate over residues 197–209 (TGKRRGRPPKRKK). The span at 210–222 (LQEEIISSEKQEE) shows a compositional bias: basic and acidic residues. Over residues 223 to 234 (NSLTSDLQTRNG) the composition is skewed to polar residues. Ser402 is modified (phosphoserine). Residues 414 to 518 (FELDDDFTAM…RCFHRAMTKH (105 aa)) enclose the Bromo domain. A Phosphothreonine modification is found at Thr526. Disordered regions lie at residues 536–667 (EKRE…HPPF), 767–796 (HGTT…TLGH), 827–868 (GYMQ…GESM), 884–1020 (VCPP…DNSY), 1046–1072 (VVGE…LCPR), 1131–1308 (LASM…YLYG), 1331–1368 (MLQT…VATQ), and 1396–1453 (QTGT…LDQS). A Phosphoserine modification is found at Ser551. Positions 637-649 (GSLQGSDPTNLHG) are enriched in polar residues. Pro residues predominate over residues 655–664 (EAPPGEPLQH). The segment covering 887-905 (PGVPYHPRQPTPPQLPGPF) has biased composition (pro residues). Ser983 is modified (phosphoserine). Basic and acidic residues predominate over residues 985 to 998 (QERETEDSQLKSDA). Polar residues predominate over residues 999–1020 (SDSADTYKTSKNKNTWPLDNSY). Residues Arg1166 and Arg1172 each carry the asymmetric dimethylarginine modification. Composition is skewed to low complexity over residues 1173 to 1187 (YSYQ…HPYQ) and 1202 to 1211 (QRSLPSQRSP). The segment covering 1228-1250 (NVLSSLQGCETLNTALTSPTQMD) has biased composition (polar residues). Positions 1265-1289 (GPEEEKMDESVERPESPKEFLDLDN) are enriched in basic and acidic residues. At Ser1280 the chain carries Phosphoserine. Composition is skewed to polar residues over residues 1291-1304 (NAAT…STSD) and 1331-1346 (MLQT…SASH). Positions 1352 to 1364 (YPSPVPAHPPPHP) are enriched in pro residues.

As to quaternary structure, component of the CERF-1 ISWI chromatin remodeling complex (also called the CECR2-containing remodeling factor (CERF) complex) at least composed of CECR2 and SMARCA1. Component of the CERF-5 ISWI chromatin remodeling complex at least composed of CECR2 and SMARCA5/SNF2H. LUZP1 is detected as part of the CERF-1 and CERF-5 complexes in embryonic stem (ES) cells where it is involved in complex stabilization but is not detected in the complexes in the testis. Interacts with CCAR2; CCAR2 may form part of the CERF-1 and/or CEF-5 ISWI chromatin remodeling complexes in ES cells. Interacts with acetylated lysine residues on histone H2A and H3 (in vitro). Interacts with LRPPRC.

The protein resides in the nucleus. Regulatory subunit of the ATP-dependent CERF-1 and CERF-5 ISWI chromatin remodeling complexes, which form ordered nucleosome arrays on chromatin and facilitate access to DNA during DNA-templated processes such as DNA replication, transcription, and repair. The complexes do not have the ability to slide mononucleosomes to the center of a DNA template. The CERF-1 ISWI chromatin remodeling complex has a lower ATP hydrolysis rate than the CERF-5 ISWI chromatin remodeling complex. Plays a role in various processes during development: required during embryogenesis for neural tube closure and inner ear development. In adults, required for spermatogenesis, via the formation of ISWI-type chromatin complexes. In histone-modifying complexes, CECR2 recognizes and binds acylated histones: binds histones that are acetylated and/or butyrylated. May also be involved through its interaction with LRPPRC in the integration of cytoskeletal network with vesicular trafficking, nucleocytosolic shuttling, transcription, chromosome remodeling and cytokinesis. The chain is Chromatin remodeling regulator CECR2 from Mus musculus (Mouse).